The sequence spans 496 residues: Apolipoprotein N-acyltransferase (496 aa).

The next 6 helical transmembrane spans lie at 6–26 (IICL…FFIP), 50–70 (FGYL…SIGV), 77–97 (FWWA…FFIS), 114–134 (LIFC…LTGL), 148–168 (ILIQ…VIYI), and 183–203 (LKIL…YGAV). The 245-residue stretch at 220-464 (VQPSIPQTAK…QGLIPQKLTT (245 aa)) folds into the CN hydrolase domain. The Proton acceptor role is filled by Glu259. Lys322 is an active-site residue. Residue Cys372 is the Nucleophile of the active site. A helical transmembrane segment spans residues 474 to 494 (FAMLLSIVFIILIHYLLSLIF).

The protein belongs to the CN hydrolase family. Apolipoprotein N-acyltransferase subfamily.

The protein localises to the cell inner membrane. The catalysed reaction is N-terminal S-1,2-diacyl-sn-glyceryl-L-cysteinyl-[lipoprotein] + a glycerophospholipid = N-acyl-S-1,2-diacyl-sn-glyceryl-L-cysteinyl-[lipoprotein] + a 2-acyl-sn-glycero-3-phospholipid + H(+). The protein operates within protein modification; lipoprotein biosynthesis (N-acyl transfer). In terms of biological role, catalyzes the phospholipid dependent N-acylation of the N-terminal cysteine of apolipoprotein, the last step in lipoprotein maturation. This is Apolipoprotein N-acyltransferase from Rickettsia prowazekii (strain Madrid E).